Reading from the N-terminus, the 593-residue chain is MAAASSSDSDSGRAESNEANSKWLDAHYDPMANIHTFSSCLSLADLHGDGEYKLVVGDLGPGGQQPRLKVLKGPTVLTESPLPALPASAATFLMDQHEPRTPALALASGPCVYVYKNLRPYFKFSLPQLPPNPLEQDVWNQAKEDQIDPLTLKEMLEDIREKADVPLSVQSLRFLQLELSEMEAFVNQHKSKVIKRQTVITTMTTLKKNLADEDAASCLVLGTESKELLVLDPEAFTILAKMSLPSVPVFLEVSGQFDVEFRLTAACRNGSIYILRRDSKHPKYCIELSAQPVGLVRVHKVLVVGSTQESLHGFTHKGKKLWTVQMPAAILTMNLLEQRSRGLQAVMAALANGEVRIYRDKALLNVIHAPDAVTSLCFGRYGREDNTLIMTTRGGGLIIKILKRTAVFVEGTGEVGPPLAQTTKLSVPRKTRLYVDQTLREREAGTAMHRTFQTDLYLLRLRAARAYVQALESSLSPMSTTAREPLKLHAVVQGLGPTFKLTLHLQNTSTARPVLGLHVCFLYNKALYALPQAFFKVPLLVPGLSYPLETFVESLSSKGISDMIKVLVLREGQSAPLLSAHINMPVSEGLAAA.

An N-acetylalanine modification is found at A2.

Part of BBSome complex, that contains BBS1, BBS2, BBS4, BBS5, BBS7, BBS8/TTC8, BBS9 and BBIP10. Interacts with the C-terminus of RAB3IP. Interacts with CCDC28B and ALDOB. Interacts with PKD1.

It is found in the cell projection. Its subcellular location is the cilium membrane. It localises to the cytoplasm. The protein resides in the cytoskeleton. The protein localises to the microtubule organizing center. It is found in the centrosome. Its subcellular location is the centriolar satellite. Its function is as follows. The BBSome complex is thought to function as a coat complex required for sorting of specific membrane proteins to the primary cilia. The BBSome complex is required for ciliogenesis but is dispensable for centriolar satellite function. This ciliogenic function is mediated in part by the Rab8 GDP/GTP exchange factor, which localizes to the basal body and contacts the BBSome. Rab8(GTP) enters the primary cilium and promotes extension of the ciliary membrane. Firstly the BBSome associates with the ciliary membrane and binds to RAB3IP/Rabin8, the guanosyl exchange factor (GEF) for Rab8 and then the Rab8-GTP localizes to the cilium and promotes docking and fusion of carrier vesicles to the base of the ciliary membrane. The BBSome complex, together with the LTZL1, controls SMO ciliary trafficking and contributes to the sonic hedgehog (SHH) pathway regulation. Required for proper BBSome complex assembly. Plays a role in olfactory cilium biogenesis/maintenance and trafficking and is essential for the localization of the BBSome complex in the olfactory sensory neurons cilia. The polypeptide is BBSome complex member BBS1 (Bbs1) (Mus musculus (Mouse)).